Consider the following 147-residue polypeptide: Ribosome maturation factor RimP (147 aa).

Belongs to the RimP family.

It is found in the cytoplasm. Its function is as follows. Required for maturation of 30S ribosomal subunits. The sequence is that of Ribosome maturation factor RimP from Legionella pneumophila (strain Lens).